Here is a 476-residue protein sequence, read N- to C-terminus: MADFFTEKPVATNVAEFSVSEIANALKRVVEDKFGYVRIRGEISGYRGAHASGHAYFALKDDKARLEAVIWLSVMKKLSFPPEEGMEVIAVGKLTTYPGSSKYQIVIEALEPTGVGALMTLLENRKKKLAEEGLFDAANKKPLPYMPKIIGVVTSPTGAVIRDIIHRIFDRFPLHILVWPVRVQGETCGREVASAVEGFNALFLGGGIPKPDLIIVARGGGSLEDLWGFNDEAVVRAVYASAIPVISAVGHETDWTLIDYAADWRAPTPTGAAERAVPVKLDIEVHLASINSRFRVGLARYFDFHQQKLRALVRGLPTVDQLFALPRRGFDEISSRLQRALCVSYDKKCFYFHALSLRFSPRLLNTKKAQYAIQEYTGRLHRAFLRNVEKQRAQVEMACRLLKSTSYQNILERGFVLALGKDHKPIKRLMQLPETGQISLRFFDGEIDVSTHDRAVNRSLKNKRIKSQKDDQGLLF.

This sequence belongs to the XseA family. Heterooligomer composed of large and small subunits.

The protein resides in the cytoplasm. It carries out the reaction Exonucleolytic cleavage in either 5'- to 3'- or 3'- to 5'-direction to yield nucleoside 5'-phosphates.. In terms of biological role, bidirectionally degrades single-stranded DNA into large acid-insoluble oligonucleotides, which are then degraded further into small acid-soluble oligonucleotides. This Bartonella bacilliformis (strain ATCC 35685 / KC583 / Herrer 020/F12,63) protein is Exodeoxyribonuclease 7 large subunit.